The primary structure comprises 361 residues: Chorismate synthase (361 aa).

Arg48 lines the NADP(+) pocket. FMN is bound by residues 126 to 128 (RFS), Gly286, 301 to 305 (KPTPS), and Arg328.

This sequence belongs to the chorismate synthase family. Requires FMNH2 as cofactor.

The catalysed reaction is 5-O-(1-carboxyvinyl)-3-phosphoshikimate = chorismate + phosphate. The protein operates within metabolic intermediate biosynthesis; chorismate biosynthesis; chorismate from D-erythrose 4-phosphate and phosphoenolpyruvate: step 7/7. In terms of biological role, catalyzes the anti-1,4-elimination of the C-3 phosphate and the C-6 proR hydrogen from 5-enolpyruvylshikimate-3-phosphate (EPSP) to yield chorismate, which is the branch point compound that serves as the starting substrate for the three terminal pathways of aromatic amino acid biosynthesis. This reaction introduces a second double bond into the aromatic ring system. The chain is Chorismate synthase from Korarchaeum cryptofilum (strain OPF8).